The primary structure comprises 390 residues: Nucleotide-sugar uncharacterized transporter 1 (390 aa).

The next 10 helical transmembrane spans lie at 61-81 (ICGPTVALTFNFVVAISIIFM), 89-109 (IGFEFPVFLTFIHYIVAYLLM), 128-148 (SLLPLYTLGIVMSLSTGLANV), 155-175 (VGFYQMAKIAVTPSIVFAEFL), 182-201 (SFMKVVSLTVVSVGVAVATV), 206-228 (FSLFGACVAFAWIIPSATNKILW), 249-269 (ITLLFLVSMIPFLDPPGALSF), 278-298 (AILVSALLGFFLQWSGALALG), 306-326 (VVLGQFKTCVLLLGNYYIFGS), and 329-349 (GFISVGGAFVAIMGTSLYTYL). The segment covering 356 to 365 (LKTSSSSSAL) has biased composition (low complexity). Residues 356–390 (LKTSSSSSALSEKKSRFSDLKDDDKNLEPYGSEAV) form a disordered region. Residues 366–382 (SEKKSRFSDLKDDDKNL) show a composition bias toward basic and acidic residues.

Belongs to the TPT transporter family. TPT (TC 2.A.7.9) subfamily.

The protein localises to the membrane. The protein is Nucleotide-sugar uncharacterized transporter 1 of Arabidopsis thaliana (Mouse-ear cress).